The following is a 312-amino-acid chain: Aspartate carbamoyltransferase catalytic subunit (312 aa).

The carbamoyl phosphate site is built by Arg-54 and Thr-55. Lys-83 contacts L-aspartate. Arg-104, His-132, and Gln-135 together coordinate carbamoyl phosphate. Positions 165 and 226 each coordinate L-aspartate. Residues Leu-263 and Pro-264 each coordinate carbamoyl phosphate.

Belongs to the aspartate/ornithine carbamoyltransferase superfamily. ATCase family. Heterooligomer of catalytic and regulatory chains.

The catalysed reaction is carbamoyl phosphate + L-aspartate = N-carbamoyl-L-aspartate + phosphate + H(+). It functions in the pathway pyrimidine metabolism; UMP biosynthesis via de novo pathway; (S)-dihydroorotate from bicarbonate: step 2/3. Functionally, catalyzes the condensation of carbamoyl phosphate and aspartate to form carbamoyl aspartate and inorganic phosphate, the committed step in the de novo pyrimidine nucleotide biosynthesis pathway. The chain is Aspartate carbamoyltransferase catalytic subunit from Methanothermobacter thermautotrophicus (strain ATCC 29096 / DSM 1053 / JCM 10044 / NBRC 100330 / Delta H) (Methanobacterium thermoautotrophicum).